We begin with the raw amino-acid sequence, 399 residues long: E3 ubiquitin-protein ligase APD4 (399 aa).

2 consecutive transmembrane segments (helical) span residues 42 to 62 and 284 to 304; these read FGII…GVYG and LIAY…AIHF. The segment at 348-387 adopts an RING-type zinc-finger fold; that stretch reads CAICFDAPRDCCFLPCGHCVSCYQCGTKIKRTKGRCPICR.

Expressed in the shoot apical meristems (SAM), root tips and inflorescences.

The protein resides in the endomembrane system. It localises to the vacuole membrane. The enzyme catalyses S-ubiquitinyl-[E2 ubiquitin-conjugating enzyme]-L-cysteine + [acceptor protein]-L-lysine = [E2 ubiquitin-conjugating enzyme]-L-cysteine + N(6)-ubiquitinyl-[acceptor protein]-L-lysine.. It functions in the pathway protein modification; protein ubiquitination. Functionally, involved in pollen mitosis II (PMII) regulation during male gametogenesis. The chain is E3 ubiquitin-protein ligase APD4 from Arabidopsis thaliana (Mouse-ear cress).